The sequence spans 270 residues: Phosphatidylglycerol--prolipoprotein diacylglyceryl transferase (270 aa).

A run of 7 helical transmembrane segments spans residues 14–34 (VIFE…LLGF), 60–80 (LLFN…VLFY), 95–115 (VWEG…AMLI), 128–148 (ADFV…GNFI), 176–196 (SQLY…NWYI), 202–222 (IGAT…IVEF), and 238–258 (ISMG…IMLV). A 1,2-diacyl-sn-glycero-3-phospho-(1'-sn-glycerol) is bound at residue Arg143.

Belongs to the Lgt family.

Its subcellular location is the cell inner membrane. The catalysed reaction is L-cysteinyl-[prolipoprotein] + a 1,2-diacyl-sn-glycero-3-phospho-(1'-sn-glycerol) = an S-1,2-diacyl-sn-glyceryl-L-cysteinyl-[prolipoprotein] + sn-glycerol 1-phosphate + H(+). It participates in protein modification; lipoprotein biosynthesis (diacylglyceryl transfer). Functionally, catalyzes the transfer of the diacylglyceryl group from phosphatidylglycerol to the sulfhydryl group of the N-terminal cysteine of a prolipoprotein, the first step in the formation of mature lipoproteins. This is Phosphatidylglycerol--prolipoprotein diacylglyceryl transferase from Pasteurella multocida (strain Pm70).